Here is a 515-residue protein sequence, read N- to C-terminus: Protein NRT1/ PTR FAMILY 4.1 (515 aa).

The next 12 membrane-spanning stretches (helical) occupy residues 24–44, 71–91, 93–113, 134–154, 168–188, 204–224, 298–318, 339–359, 381–401, 413–433, 461–481, and 492–512; these read GIKA…VFLA, FVGT…SFLT, FAAF…LTLQ, VLFT…GSLP, LISG…FLAV, FTIS…GCPM, FLAL…VAQM, IPVA…LALY, IGYG…VEVK, ISVF…MLTV, AMGF…TGWL, and LFYL…IFWA.

Belongs to the major facilitator superfamily. Proton-dependent oligopeptide transporter (POT/PTR) (TC 2.A.17) family. As to expression, expressed in siliques and flowers.

The protein localises to the membrane. In terms of biological role, involved in (+) and (-)-abscisic acid transport (ABA) and in gibberellin import. This chain is Protein NRT1/ PTR FAMILY 4.1 (NPF4.1), found in Arabidopsis thaliana (Mouse-ear cress).